Reading from the N-terminus, the 291-residue chain is MTAQLIDGKALAAQVRQEVEEGVAAFIADGWAAPGLAVVLVGCDAASQVYVENKIRQTEAVGMRSERFLLPADTDESQLLTLIEQLNNNDAIHGILVQFPLPPQIDVSRVISAIHPSKDVDGFNPLNVGRLAAGLEGGLTPCTPLGVMRLIRSVHPDIAGMGALVVGASNVVGRPLARLLLQADCTVSIAHIRTTDLARRCREADILVVATGVPGLIRGDYIKPGATVIDVGISRVRLPNGRDKLTGDVAFEEAVEVAGAITPVPGGVGPMTIAYLLANTLQAARAAVRLR.

NADP(+) is bound by residues 167–169, I192, and I233; that span reads GAS.

This sequence belongs to the tetrahydrofolate dehydrogenase/cyclohydrolase family. As to quaternary structure, homodimer.

It catalyses the reaction (6R)-5,10-methylene-5,6,7,8-tetrahydrofolate + NADP(+) = (6R)-5,10-methenyltetrahydrofolate + NADPH. The catalysed reaction is (6R)-5,10-methenyltetrahydrofolate + H2O = (6R)-10-formyltetrahydrofolate + H(+). It functions in the pathway one-carbon metabolism; tetrahydrofolate interconversion. Functionally, catalyzes the oxidation of 5,10-methylenetetrahydrofolate to 5,10-methenyltetrahydrofolate and then the hydrolysis of 5,10-methenyltetrahydrofolate to 10-formyltetrahydrofolate. The chain is Bifunctional protein FolD 1 from Pseudomonas putida (strain ATCC 47054 / DSM 6125 / CFBP 8728 / NCIMB 11950 / KT2440).